The sequence spans 204 residues: Small ribosomal subunit protein uS4c (204 aa).

The region spanning 90-150 (MRLDNILYRL…GKKTDQLKTI (61 aa)) is the S4 RNA-binding domain.

The protein belongs to the universal ribosomal protein uS4 family. As to quaternary structure, part of the 30S ribosomal subunit. Contacts protein S5. The interaction surface between S4 and S5 is involved in control of translational fidelity.

It localises to the plastid. The protein localises to the chloroplast. In terms of biological role, one of the primary rRNA binding proteins, it binds directly to 16S rRNA where it nucleates assembly of the body of the 30S subunit. Its function is as follows. With S5 and S12 plays an important role in translational accuracy. The chain is Small ribosomal subunit protein uS4c (rps4) from Gnetum parvifolium (Small-leaved jointfir).